A 606-amino-acid polypeptide reads, in one-letter code: Acetylcholinesterase (606 aa).

The signal sequence occupies residues 1–28 (MPSCQPGKMPAPWPWWLQLLLCIPSCVA). A disulfide bridge connects residues C98 and C125. S231 acts as the Acyl-ester intermediate in catalysis. C285 and C296 form a disulfide bridge. A glycan (N-linked (GlcNAc...) asparagine) is linked at N289. Residue E358 is the Charge relay system of the active site. An N-linked (GlcNAc...) asparagine glycan is attached at N374. A disulfide bridge links C433 with C552. H471 functions as the Charge relay system in the catalytic mechanism. An N-linked (GlcNAc...) asparagine glycan is attached at N484.

This sequence belongs to the type-B carboxylesterase/lipase family. Isoform S is monomeric. Isoform T can form oligomers, including collagen-tailed forms. In terms of processing, the N-terminus is blocked. Liver and muscle contain both isoform T and isoform S. Venom gland predominantly contains isoform S.

It is found in the synapse. The protein resides in the secreted. The protein localises to the cell membrane. The catalysed reaction is acetylcholine + H2O = choline + acetate + H(+). Its activity is regulated as follows. Inhibited by active site inhibitors: edrophonium, trimethyl-(m-acetamidopheny1)-ammonium iodide, and trimethyl-(p-acetarnidopheny1)-ammonium iodide. Inhibited by both active and peripheral site inhibitors: decamethonium, and BW284c51. Inhibited by peripheral site inhibitors: snake acetylcholinesterase fasciculin-2, propidium, gallamine, D-tubocurarine, and tacrine. Also inhibited by antibodies Elec410 and Fab410. In muscle, it terminates signal transduction at the neuromuscular junction by rapid hydrolysis of the acetylcholine released into the synaptic cleft. In liver, its function is unclear: it could serve as a safeguard against any diffusion of acetylcholine from synapses into the circulation. In venom, its toxic role is unclear: it could result in less musculatory control by rapidly hydrolyzing acetylcholine, or that it works synergistically with alkaline phosphatase (ALP) in paralyzing prey through hypotension. This Bungarus fasciatus (Banded krait) protein is Acetylcholinesterase (ACHE).